Reading from the N-terminus, the 181-residue chain is Putative manganese efflux pump MntP (181 aa).

Transmembrane regions (helical) follow at residues 35 to 55, 59 to 79, 102 to 122, 126 to 146, and 161 to 181; these read IIFG…GSIA, VADW…LLMI, AATG…LAFI, ILIT…LGVM, and ILGG…HLTM.

The protein belongs to the MntP (TC 9.B.29) family.

It localises to the cell inner membrane. Probably functions as a manganese efflux pump. In Nitrosomonas eutropha (strain DSM 101675 / C91 / Nm57), this protein is Putative manganese efflux pump MntP.